A 157-amino-acid chain; its full sequence is Protein-export protein SecB (157 aa).

It belongs to the SecB family. Homotetramer, a dimer of dimers. One homotetramer interacts with 1 SecA dimer.

The protein localises to the cytoplasm. Functionally, one of the proteins required for the normal export of preproteins out of the cell cytoplasm. It is a molecular chaperone that binds to a subset of precursor proteins, maintaining them in a translocation-competent state. It also specifically binds to its receptor SecA. This is Protein-export protein SecB from Photobacterium profundum (strain SS9).